A 1229-amino-acid polypeptide reads, in one-letter code: Receptor-type adenylate cyclase GRESAG 4.3 (1229 aa).

The Cytoplasmic segment spans residues 1 to 24 (MIARVCRLTKHSKPPHLPITLTTP). Residues 25–45 (TLFLVVLVLLQLHPICVLVNV) traverse the membrane as a helical segment. Residues 46-845 (DDGGGVTVKA…PNGNALTPAQ (800 aa)) lie on the Extracellular side of the membrane. N77, N84, N626, N693, and N768 each carry an N-linked (GlcNAc...) asparagine glycan. A helical transmembrane segment spans residues 846-866 (LAGVVGGSLFVVALAICLSVL). Over 867–1229 (ACFTLRGTRD…SNDLSDMIRV (363 aa)) the chain is Cytoplasmic. Residues 889–1043 (TLIFTDIESS…RTSNMAARTE (155 aa)) enclose the Guanylate cyclase domain. Residues D894 and D937 each coordinate Mg(2+).

This sequence belongs to the adenylyl cyclase class-3 family. It depends on Mg(2+) as a cofactor.

It localises to the membrane. It catalyses the reaction ATP = 3',5'-cyclic AMP + diphosphate. Functionally, could act as a receptor for an unknown ligand. In Trypanosoma brucei brucei, this protein is Receptor-type adenylate cyclase GRESAG 4.3 (GRESAG 4.3).